A 564-amino-acid polypeptide reads, in one-letter code: MAESKPTPQSTFTGPIVVDPITRIEGHLRIMVEVENGKVKDAWSSSQLFRGLEIILKGRDPRDAQHFTQRACGVCTYVHALASSRCVDDAVKVSIPANARMMRNLVMASQYLHDHLVHFYHLHALDWVDVTAALKADPNKAAKLAASIAPARPGNSAKALKAVQDKLKAFVESGQLGIFTNAYFLGGHKAYYLPPEVDLIATAHYLEALHMQVKAASAMAILGGKNPHTQFTVVGGCSNYQGLTKDPLANYLALSKEVCQFVNECYIPDLLAVAGFYKDWGGIGGTSNYLAFGEFATDDSSPEKHLATSQFPSGVITGRDLGKVDNVDLGAIYEDVKYSWYAPGGDGKHPYDGVTDPKYTKLDDKDHYSWMKAPRYKGKAMEVGPLARTFIAYAKGQPDFKKVVDMVLGKLSVPATALHSTLGRTAARGIETAIVCANMEKWIKEMADSGAKDNTLCAKWEMPEESKGVGLADAPRGALSHWIRIKGKKIDNFQLVVPSTWNLGPRGAQGDKSPVEEALIGTPIADPKRPVEILRTVHAFDPCIACGVHVIEPETNEILKFKVC.

Ni(2+) is bound by residues Cys-72, Cys-75, Cys-543, and Cys-546. The propeptide occupies 550-564 (VIEPETNEILKFKVC).

This sequence belongs to the [NiFe]/[NiFeSe] hydrogenase large subunit family. As to quaternary structure, heterodimer of a large and a small subunit. Requires Ni(2+) as cofactor.

The protein resides in the periplasm. The enzyme catalyses 2 Fe(III)-[cytochrome c3] + H2 = 2 Fe(II)-[cytochrome c3] + 2 H(+). The chain is Periplasmic [NiFe] hydrogenase large subunit (hydB) from Solidesulfovibrio fructosivorans (Desulfovibrio fructosivorans).